The chain runs to 805 residues: Rho GTPase-activating protein 42 (805 aa).

A BAR domain is found at 7-262; that stretch reads EFSDSFLDSP…IRSAEQDFKA (256 aa). Residues 225-262 are a coiled coil; sequence KQQLQFNLQNTRNNFESTRQEVENLMRRIRSAEQDFKA. One can recognise a PH domain in the interval 265–374; the sequence is QWTMEGFLYV…WMEAMDGKEP (110 aa). Residues 376–572 enclose the Rho-GAP domain; it reads YTLPALLSKK…ILIENYDKIF (197 aa). Disordered stretches follow at residues 576–600, 625–725, and 765–805; these read PDPNVPLPHPQSHSQSRGGARRSKA, SDTF…SELL, and VSRS…PGSV. Low complexity predominate over residues 626–654; it reads DTFSSSPSSTPMGSMESLSSHSSEQNSCS. Residues 670–693 show a composition bias toward polar residues; the sequence is LCWTTPSPSTNGPKSPACTTSPDS. Residues 694-704 are compositionally biased toward basic and acidic residues; sequence SSKEDANKTDG. Positions 710-721 are enriched in polar residues; sequence LSTSPGDRSSPA. The span at 782–793 shows a compositional bias: basic and acidic residues; sequence PPKDGMRFRDDS.

Its function is as follows. May influence blood pressure by functioning as a GTPase-activating protein in vascular smooth muscle. In Danio rerio (Zebrafish), this protein is Rho GTPase-activating protein 42.